A 73-amino-acid chain; its full sequence is MTSLQVLSIISSFLTQGLPHPPHVAADSHYISKKDSISASVGRLTSLLPCLCALHAYGVGHRPFVIVDIFYAE.

This is an uncharacterized protein from Treponema pallidum (strain Nichols).